The following is a 186-amino-acid chain: Ribosome-recycling factor (186 aa).

This sequence belongs to the RRF family.

The protein localises to the cytoplasm. Responsible for the release of ribosomes from messenger RNA at the termination of protein biosynthesis. May increase the efficiency of translation by recycling ribosomes from one round of translation to another. The chain is Ribosome-recycling factor from Porphyromonas gingivalis (strain ATCC BAA-308 / W83).